Consider the following 103-residue polypeptide: Large ribosomal subunit protein bL21 (103 aa).

This sequence belongs to the bacterial ribosomal protein bL21 family. As to quaternary structure, part of the 50S ribosomal subunit. Contacts protein L20.

Its function is as follows. This protein binds to 23S rRNA in the presence of protein L20. In Teredinibacter turnerae (strain ATCC 39867 / T7901), this protein is Large ribosomal subunit protein bL21.